The primary structure comprises 84 residues: Toxin To5 (84 aa).

The signal sequence occupies residues 1-19; the sequence is MKAIIFFIGCLMLIDLVAG. Positions 21-82 constitute an LCN-type CS-alpha/beta domain; that stretch reads RSGYPVTQKG…IWGSYPNNCG (62 aa). Disulfide bonds link Cys31–Cys81, Cys35–Cys57, Cys43–Cys62, and Cys47–Cys64. Cys81 is subject to Cysteine amide.

Expressed by the venom gland.

The protein localises to the secreted. Functionally, beta toxins bind voltage-independently at site-4 of sodium channels (Nav) and shift the voltage of activation toward more negative potentials thereby affecting sodium channel activation and promoting spontaneous and repetitive firing. The sequence is that of Toxin To5 from Tityus obscurus (Amazonian scorpion).